The following is a 2833-amino-acid chain: Reticulocyte-binding protein 1 (2833 aa).

A signal peptide spans 1–22 (MKRGICLAALLCLFNYLGAGHG). Positions 75–91 (ETDNASGKDAEGSRPSH) are enriched in basic and acidic residues. 3 disordered regions span residues 75 to 95 (ETDN…DSSF), 112 to 133 (HVKE…KENE), and 819 to 860 (KHKQ…NFSR). Positions 819-836 (KHKQNRSEKEEEYFKNES) are enriched in basic and acidic residues. The span at 837–849 (VEEDLSREETEEQ) shows a compositional bias: acidic residues. A Cell attachment site motif is present at residues 2563 to 2565 (RGD). The segment at 2619–2755 (EMNSKKSAIE…GTYQDTSNSS (137 aa)) is disordered. 2 stretches are compositionally biased toward basic and acidic residues: residues 2621–2633 (NSKK…EKTA) and 2640–2652 (ENNR…RARV). Residues 2655-2670 (MSMNNDPTQSETTHSE) show a composition bias toward polar residues. Over residues 2706 to 2720 (LEEEETTAPMEETEM) the composition is skewed to acidic residues. Residues 2731–2742 (TRSDEPDMHTEN) are compositionally biased toward basic and acidic residues. The segment covering 2743–2755 (TQDGTYQDTSNSS) has biased composition (polar residues).

As to quaternary structure, homodimer.

It is found in the membrane. In terms of biological role, involved in reticulocyte adhesion. Specifically binds to human reticulocyte cells. This chain is Reticulocyte-binding protein 1 (RBP1), found in Plasmodium vivax (strain Belem).